We begin with the raw amino-acid sequence, 621 residues long: DNA mismatch repair protein MutL (621 aa).

It belongs to the DNA mismatch repair MutL/HexB family.

Its function is as follows. This protein is involved in the repair of mismatches in DNA. It is required for dam-dependent methyl-directed DNA mismatch repair. May act as a 'molecular matchmaker', a protein that promotes the formation of a stable complex between two or more DNA-binding proteins in an ATP-dependent manner without itself being part of a final effector complex. The sequence is that of DNA mismatch repair protein MutL from Xylella fastidiosa (strain M12).